The following is a 71-amino-acid chain: Beta-defensin 124 (71 aa).

The first 22 residues, 1 to 22 (MTQLLLFLVALLVLGHVPSGRS), serve as a signal peptide directing secretion. Disulfide bonds link Cys27-Cys54, Cys34-Cys48, and Cys38-Cys55.

Belongs to the beta-defensin family.

It localises to the secreted. Has antibacterial activity. The sequence is that of Beta-defensin 124 (DEFB124) from Homo sapiens (Human).